Consider the following 157-residue polypeptide: Endoribonuclease YbeY (157 aa).

Zn(2+) is bound by residues His114, His118, and His124.

This sequence belongs to the endoribonuclease YbeY family. Zn(2+) is required as a cofactor.

The protein resides in the cytoplasm. Single strand-specific metallo-endoribonuclease involved in late-stage 70S ribosome quality control and in maturation of the 3' terminus of the 16S rRNA. The chain is Endoribonuclease YbeY from Yersinia enterocolitica serotype O:8 / biotype 1B (strain NCTC 13174 / 8081).